A 636-amino-acid polypeptide reads, in one-letter code: Rust resistance kinase Lr10 (636 aa).

Residues 1–24 (MSKLLVIALLLLPLINHGIYLATA) form the signal peptide. The Extracellular segment spans residues 25-276 (WDDQDFFKYC…MPDPHGSHIK (252 aa)). N-linked (GlcNAc...) asparagine glycosylation is found at asparagine 56, asparagine 177, and asparagine 222. Residues 277-297 (VIAATSSVAAFVALLLTVATV) form a helical membrane-spanning segment. Residues 298-636 (LYLSLKTRYN…FVSSENELMS (339 aa)) lie on the Cytoplasmic side of the membrane. Positions 339–628 (RRFKEKVGQG…SLQMPPKPFV (290 aa)) constitute a Protein kinase domain. ATP-binding positions include 345-353 (VGQGGFGSV) and lysine 367. Aspartate 466 serves as the catalytic Proton acceptor.

The protein belongs to the protein kinase superfamily. Ser/Thr protein kinase family. Specifically expressed in the aerial parts of the plant.

It is found in the cell membrane. The catalysed reaction is L-seryl-[protein] + ATP = O-phospho-L-seryl-[protein] + ADP + H(+). It catalyses the reaction L-threonyl-[protein] + ATP = O-phospho-L-threonyl-[protein] + ADP + H(+). This Triticum aestivum (Wheat) protein is Rust resistance kinase Lr10.